We begin with the raw amino-acid sequence, 830 residues long: DNA gyrase subunit A (830 aa).

The Topo IIA-type catalytic domain occupies 33-497 (LPDVRDGLKP…AENDIDIEDL (465 aa)). The active-site O-(5'-phospho-DNA)-tyrosine intermediate is Y121. A GyrA-box motif is present at residues 524 to 530 (QKRGGRG). The disordered stretch occupies residues 805 to 830 (KDDSEQLEDSEEVSEVHDAEENNSEE).

This sequence belongs to the type II topoisomerase GyrA/ParC subunit family. In terms of assembly, heterotetramer, composed of two GyrA and two GyrB chains. In the heterotetramer, GyrA contains the active site tyrosine that forms a transient covalent intermediate with DNA, while GyrB binds cofactors and catalyzes ATP hydrolysis.

It is found in the cytoplasm. It catalyses the reaction ATP-dependent breakage, passage and rejoining of double-stranded DNA.. In terms of biological role, a type II topoisomerase that negatively supercoils closed circular double-stranded (ds) DNA in an ATP-dependent manner to modulate DNA topology and maintain chromosomes in an underwound state. Negative supercoiling favors strand separation, and DNA replication, transcription, recombination and repair, all of which involve strand separation. Also able to catalyze the interconversion of other topological isomers of dsDNA rings, including catenanes and knotted rings. Type II topoisomerases break and join 2 DNA strands simultaneously in an ATP-dependent manner. The chain is DNA gyrase subunit A from Clostridium acetobutylicum (strain ATCC 824 / DSM 792 / JCM 1419 / IAM 19013 / LMG 5710 / NBRC 13948 / NRRL B-527 / VKM B-1787 / 2291 / W).